The sequence spans 201 residues: Sorting nexin-10 (201 aa).

The tract at residues 8 to 125 is required for interaction with ATP6V1D; it reads EEFVSVWVRD…SLHLFLQSHL (118 aa). One can recognise a PX domain in the interval 10–127; sequence FVSVWVRDPR…HLFLQSHLNS (118 aa). A 1,2-diacyl-sn-glycero-3-phospho-(1D-myo-inositol-3-phosphate)-binding residues include R53, K79, and R94. The interval 155 to 201 is disordered; sequence RFPEEEEEGKKDADVEYDSESSSSGLGHSSDDSSSHGCKTSPALQES.

Belongs to the sorting nexin family. As to quaternary structure, interacts with ATP6V1D; may play a role in ciliogenesis. In terms of tissue distribution, expressed in femur, calvariae and teeth.

The protein localises to the cytoplasm. The protein resides in the endosome membrane. It localises to the cytoskeleton. It is found in the microtubule organizing center. Its subcellular location is the centrosome. In terms of biological role, probable phosphoinositide-binding protein involved in protein sorting and membrane trafficking in endosomes. Plays a role in cilium biogenesis through regulation of the transport and the localization of proteins to the cilium. Required for the localization to the cilium of V-ATPase subunit ATP6V1D and ATP6V0D1, and RAB8A. Involved in osteoclast differentiation and therefore bone resorption. The chain is Sorting nexin-10 (Snx10) from Mus musculus (Mouse).